The sequence spans 450 residues: Solute carrier family 52, riboflavin transporter, member 2 (450 aa).

The next 5 membrane-spanning stretches (helical) occupy residues 14–34 (LLVA…WVEL), 47–67 (LPSY…LVTL), 86–106 (GLGI…APVA), 112–132 (VAFL…NVTF), and 147–167 (FFLG…GQGV). N178 is a glycosylation site (N-linked (GlcNAc...) asparagine). A helical transmembrane segment spans residues 201-221 (FFWVLTALLGTSAAAFQGLLL). Over residues 227–236 (TSEPTTGTGL) the composition is skewed to low complexity. The disordered stretch occupies residues 227–264 (TSEPTTGTGLRVETPGTEEEEEEEEASPLQEPPGQVAG). Positions 242–252 (GTEEEEEEEEA) are enriched in acidic residues. A run of 5 helical transmembrane segments spans residues 282–302 (ACLL…LPAV), 317–337 (LAVV…MAVL), 344–364 (LCGL…LAAL), 369–389 (PLVG…LCAG), and 409–429 (ALLA…VAMF).

This sequence belongs to the riboflavin transporter family.

It is found in the cell membrane. It carries out the reaction riboflavin(in) = riboflavin(out). Its activity is regulated as follows. Riboflavin transport is Na(+)-independent but moderately pH-sensitive. Activity is strongly inhibited by riboflavin analogs, such as lumiflavin. Weakly inhibited by flavin adenine dinucleotide (FAD) and flavin mononucleotide (FMN). Functionally, plasma membrane transporter mediating the uptake by cells of the water soluble vitamin B2/riboflavin that plays a key role in biochemical oxidation-reduction reactions of the carbohydrate, lipid, and amino acid metabolism. May also act as a receptor for 4-hydroxybutyrate. The protein is Solute carrier family 52, riboflavin transporter, member 2 (Slc52a2) of Mus musculus (Mouse).